Reading from the N-terminus, the 355-residue chain is Endonuclease III homolog (355 aa).

Residues 44–50 carry the Nuclear localization signal motif; it reads PKKFRFQ. One can recognise a HhH domain in the interval 122–149; that stretch reads FQGDIPDTVEDLMTLPGVGPKMGYLCMS. Lys142 (nucleophile; for N-glycosylase activity) is an active-site residue. Residues Cys210, Cys217, Cys220, and Cys228 each coordinate [4Fe-4S] cluster. The short motif at 252 to 255 is the Nuclear localization signal element; the sequence is KKRP. Residues 303-355 form a disordered region; the sequence is KEPAADIDVDQKPPVAFHSTTKETRSLRRSKRVAKKSSQYFSQQSLQDIEDLV. Residues 338-349 are compositionally biased toward polar residues; the sequence is KSSQYFSQQSLQ.

Belongs to the Nth/MutY family. It depends on [4Fe-4S] cluster as a cofactor.

It is found in the nucleus. Its subcellular location is the mitochondrion. The catalysed reaction is 2'-deoxyribonucleotide-(2'-deoxyribose 5'-phosphate)-2'-deoxyribonucleotide-DNA = a 3'-end 2'-deoxyribonucleotide-(2,3-dehydro-2,3-deoxyribose 5'-phosphate)-DNA + a 5'-end 5'-phospho-2'-deoxyribonucleoside-DNA + H(+). In terms of biological role, bifunctional DNA N-glycosylase with associated apurinic/apyrimidinic (AP) lyase function that catalyzes the first step in base excision repair (BER), the primary repair pathway for the repair of oxidative DNA damage. The DNA N-glycosylase activity releases the damaged DNA base from DNA by cleaving the N-glycosidic bond, leaving an AP site. The AP-lyase activity cleaves the phosphodiester bond 3' to the AP site by a beta-elimination. Primarily recognizes and repairs oxidative base damage of pyrimidines. Also has 8-oxo-7,8-dihydroguanine (8-oxoG) DNA glycosylase activity. Also involved in the repair of 7-methylguanine lesions, although it cannot directly repair alkylated DNA bases. Probably does so via excision of methylformamidopyrimidine (mFapy) lesions, a spontaneous processing product of 7-methylguanine. This is Endonuclease III homolog (nth1) from Schizosaccharomyces pombe (strain 972 / ATCC 24843) (Fission yeast).